We begin with the raw amino-acid sequence, 278 residues long: Ras-related protein Rab-40A-like (278 aa).

GTP is bound by residues Gly26, Lys27, and Ser28. Mg(2+) is bound at residue Ser28. The segment at 41–49 (SPYSHLGGI) is switch-I. A Mg(2+)-binding site is contributed by Asp69. Gly72, Asn126, and Arg127 together coordinate GTP. The tract at residues 72-88 (GQGRFCTIFRSYSRGAQ) is switch-II. The SOCS box domain occupies 175–228 (LLRHRLNWLGRPSKVLSLQDLCCRTIVSCTPVHLVDKLPLPIALRSHLKSFSMA). Cys270 carries the S-palmitoyl cysteine lipid modification. Cys275 carries the S-geranylgeranyl cysteine lipid modification.

This sequence belongs to the small GTPase superfamily. Rab family. Mg(2+) serves as cofactor. In terms of tissue distribution, expressed in brain, lung, heart, skeletal muscle, kidney and liver. Highest expression in brain. Expressed in fetal brain and kidney.

Its subcellular location is the membrane. The protein localises to the cytoplasm. The protein resides in the mitochondrion. The enzyme catalyses GTP + H2O = GDP + phosphate + H(+). It functions in the pathway protein modification; protein ubiquitination. Regulated by guanine nucleotide exchange factors (GEFs) which promote the exchange of bound GDP for free GTP. Regulated by GTPase activating proteins (GAPs) which increase the GTP hydrolysis activity. Inhibited by GDP dissociation inhibitors (GDIs). Its function is as follows. May act as substrate-recognition component of the ECS(RAB40) E3 ubiquitin ligase complex which mediates the ubiquitination and subsequent proteasomal degradation of target proteins. The Rab40 subfamily belongs to the Rab family that are key regulators of intracellular membrane trafficking, from the formation of transport vesicles to their fusion with membranes. Rabs cycle between an inactive GDP-bound form and an active GTP-bound form that is able to recruit to membranes different sets of downstream effectors directly responsible for vesicle formation, movement, tethering and fusion. The protein is Ras-related protein Rab-40A-like of Homo sapiens (Human).